The primary structure comprises 243 residues: Venom nerve growth factor (243 aa).

An N-terminal signal peptide occupies residues 1 to 18; sequence MSMLCYTLIIVFLIGIWA. Positions 19 to 125 are excised as a propeptide; the sequence is APKSEDNVPL…TLNRNIRAKR (107 aa). Residues 47–66 are compositionally biased toward basic and acidic residues; that stretch reads GLKTSRNTDQRHPAPKKAED. The tract at residues 47-69 is disordered; it reads GLKTSRNTDQRHPAPKKAEDQEL. 3 disulfides stabilise this stretch: cysteine 139–cysteine 204, cysteine 182–cysteine 232, and cysteine 192–cysteine 234. Asparagine 148 carries N-linked (GlcNAc...) asparagine glycosylation.

Belongs to the NGF-beta family. Homodimer; non-covalently linked. Expressed by the venom gland.

The protein localises to the secreted. Its function is as follows. Nerve growth factor is important for the development and maintenance of the sympathetic and sensory nervous systems. It stimulates division and differentiation of sympathetic and embryonic sensory neurons as well as basal forebrain cholinergic neurons in the brain. Its relevance in the snake venom is not clear. However, it has been shown to inhibit metalloproteinase-dependent proteolysis of platelet glycoprotein Ib alpha, suggesting a metalloproteinase inhibition to prevent metalloprotease autodigestion and/or protection against prey proteases. Binds a lipid between the two protein chains in the homodimer. The lipid-bound form promotes histamine relase from mouse mast cells, contrary to the lipid-free form. This chain is Venom nerve growth factor, found in Oxyuranus scutellatus scutellatus (Australian taipan).